A 133-amino-acid polypeptide reads, in one-letter code: Ribosome-binding factor A (133 aa).

This sequence belongs to the RbfA family. Monomer. Binds 30S ribosomal subunits, but not 50S ribosomal subunits or 70S ribosomes.

The protein localises to the cytoplasm. Functionally, one of several proteins that assist in the late maturation steps of the functional core of the 30S ribosomal subunit. Associates with free 30S ribosomal subunits (but not with 30S subunits that are part of 70S ribosomes or polysomes). Required for efficient processing of 16S rRNA. May interact with the 5'-terminal helix region of 16S rRNA. The protein is Ribosome-binding factor A of Cytophaga hutchinsonii (strain ATCC 33406 / DSM 1761 / CIP 103989 / NBRC 15051 / NCIMB 9469 / D465).